A 231-amino-acid polypeptide reads, in one-letter code: ATP-dependent dethiobiotin synthetase BioD (231 aa).

E12–V17 lines the ATP pocket. A Mg(2+)-binding site is contributed by T16. The active site involves K37. Residue S41 participates in substrate binding. Residues D51, E112–G115, and P202–L204 each bind ATP. Mg(2+)-binding residues include D51 and E112.

Belongs to the dethiobiotin synthetase family. Homodimer. The cofactor is Mg(2+).

Its subcellular location is the cytoplasm. The catalysed reaction is (7R,8S)-7,8-diammoniononanoate + CO2 + ATP = (4R,5S)-dethiobiotin + ADP + phosphate + 3 H(+). The protein operates within cofactor biosynthesis; biotin biosynthesis; biotin from 7,8-diaminononanoate: step 1/2. Catalyzes a mechanistically unusual reaction, the ATP-dependent insertion of CO2 between the N7 and N8 nitrogen atoms of 7,8-diaminopelargonic acid (DAPA, also called 7,8-diammoniononanoate) to form a ureido ring. The chain is ATP-dependent dethiobiotin synthetase BioD from Bacillus subtilis subsp. natto.